We begin with the raw amino-acid sequence, 879 residues long: Leucine--tRNA ligase (879 aa).

A 'HIGH' region motif is present at residues 45 to 55 (PYPSGALHMGH). The 'KMSKS' region signature appears at 637–641 (KMSKS). An ATP-binding site is contributed by lysine 640.

The protein belongs to the class-I aminoacyl-tRNA synthetase family.

Its subcellular location is the cytoplasm. The catalysed reaction is tRNA(Leu) + L-leucine + ATP = L-leucyl-tRNA(Leu) + AMP + diphosphate. The polypeptide is Leucine--tRNA ligase (Xylella fastidiosa (strain M23)).